The chain runs to 82 residues: Cytochrome b559 subunit alpha (82 aa).

The chain crosses the membrane as a helical span at residues 22–36; that stretch reads VIHAVTLPSIFLAGY. Position 24 (His-24) interacts with heme.

The protein belongs to the PsbE/PsbF family. As to quaternary structure, heterodimer of an alpha subunit and a beta subunit. PSII is composed of 1 copy each of membrane proteins PsbA, PsbB, PsbC, PsbD, PsbE, PsbF, PsbH, PsbI, PsbJ, PsbK, PsbL, PsbM, PsbT, PsbX, PsbY, Psb30/Ycf12, peripheral proteins PsbO, CyanoQ (PsbQ), PsbU, PsbV and a large number of cofactors. It forms dimeric complexes. Requires heme b as cofactor.

The protein resides in the cellular thylakoid membrane. This b-type cytochrome is tightly associated with the reaction center of photosystem II (PSII). PSII is a light-driven water:plastoquinone oxidoreductase that uses light energy to abstract electrons from H(2)O, generating O(2) and a proton gradient subsequently used for ATP formation. It consists of a core antenna complex that captures photons, and an electron transfer chain that converts photonic excitation into a charge separation. In Prochlorococcus marinus (strain MIT 9303), this protein is Cytochrome b559 subunit alpha.